The chain runs to 231 residues: Adenosylcobinamide-GDP ribazoletransferase (231 aa).

Transmembrane regions (helical) follow at residues 28-48 (LWLF…PHFI), 97-117 (TGAG…TLLY), 121-141 (FWEI…LMLL), 162-182 (VFIG…ESLA), and 209-229 (VIGS…TIAG).

It belongs to the CobS family. Mg(2+) serves as cofactor.

It localises to the cell membrane. The enzyme catalyses alpha-ribazole + adenosylcob(III)inamide-GDP = adenosylcob(III)alamin + GMP + H(+). It catalyses the reaction alpha-ribazole 5'-phosphate + adenosylcob(III)inamide-GDP = adenosylcob(III)alamin 5'-phosphate + GMP + H(+). Its pathway is cofactor biosynthesis; adenosylcobalamin biosynthesis; adenosylcobalamin from cob(II)yrinate a,c-diamide: step 7/7. In terms of biological role, joins adenosylcobinamide-GDP and alpha-ribazole to generate adenosylcobalamin (Ado-cobalamin). Also synthesizes adenosylcobalamin 5'-phosphate from adenosylcobinamide-GDP and alpha-ribazole 5'-phosphate. This Archaeoglobus fulgidus (strain ATCC 49558 / DSM 4304 / JCM 9628 / NBRC 100126 / VC-16) protein is Adenosylcobinamide-GDP ribazoletransferase (cobS2).